The primary structure comprises 566 residues: Good for full DBP5 activity protein 2 (566 aa).

The span at 1–16 (MQVQKMVRDNSNNGSD) shows a compositional bias: polar residues. The segment at 1–41 (MQVQKMVRDNSNNGSDKSVHWERRNNNGAGPRYRSRSGNTG) is disordered.

Its function is as follows. High-copy suppressor of DBP5 mutation. This chain is Good for full DBP5 activity protein 2 (GFD2), found in Saccharomyces cerevisiae (strain ATCC 204508 / S288c) (Baker's yeast).